The chain runs to 385 residues: Isomaltose glucohydrolase (385 aa).

Tryptophan 125 provides a ligand contact to substrate. Aspartate 175 functions as the Proton acceptor in the catalytic mechanism. The active-site Proton donor is glutamate 178. Glutamate 335 serves as the catalytic Proton acceptor.

It belongs to the glycosyl hydrolase 15 family.

It is found in the cytoplasm. It carries out the reaction isomaltose + H2O = beta-D-glucose + D-glucose. Functionally, involved in the intracellular degradation of the cyclic tetrasaccharide cyclobis-(1-6)-alpha-nigerosyl (CNN) formed extracellularly from starch. Catalyzes the hydrolysis of alpha-1,6-glucosidic linkage from the non-reducing end of isomaltose to yield beta-D-glucose and D-glucose. Can also act on panose and isomaltotriose at a lower rate. It displays low or no activity toward CNN and the general GH15 enzyme substrates such as maltose, soluble starch or dextran. In Kribbella flavida (strain DSM 17836 / JCM 10339 / NBRC 14399), this protein is Isomaltose glucohydrolase.